A 128-amino-acid chain; its full sequence is Large ribosomal subunit protein bL17 (128 aa).

Belongs to the bacterial ribosomal protein bL17 family. As to quaternary structure, part of the 50S ribosomal subunit. Contacts protein L32.

In Streptococcus equi subsp. zooepidemicus (strain H70), this protein is Large ribosomal subunit protein bL17.